Consider the following 432-residue polypeptide: Cyclin-A2 (432 aa).

Position 1 is an N-acetylmethionine (Met-1). A Phosphoserine modification is found at Ser-5. Disordered regions lie at residues 26-45 (LQEDQENINPEKAAPVQQPR) and 55-75 (SGNPRGLAQQQRPKTRRVAPL). Ser-55 is subject to Phosphoserine.

The protein belongs to the cyclin family. Cyclin AB subfamily. As to quaternary structure, interacts with the CDK1 and CDK2 protein kinases to form serine/threonine kinase holoenzyme complexes. Interacts with CDK1 (hyperphosphorylated form in G1 and underphosphorylated forms in S and G2). Interacts with CDK2; the interaction increases from G1 to G2. Interacts (associated with CDK2 but not with CDK1) with SCAPER; regulates the activity of CCNA2/CDK2 by transiently maintaining CCNA2 in the cytoplasm. Forms a ternary complex with CDK2 and CDKN1B; CDKN1B inhibits the kinase activity of CDK2 through conformational rearrangements. Interacts with INCA1. (Microbial infection) Interacts with human cytomegalovirus protein UL32. Polyubiquitinated via 'Lys-11'-linked ubiquitin by the anaphase-promoting complex (APC/C), leading to its degradation by the proteasome. Deubiquitinated and stabilized by USP37 enables entry into S phase. Ubiquitinated during the G1 phase by the SCF(FBXO31) complex, leading to its proteasomal degradation.

It is found in the nucleus. Its subcellular location is the cytoplasm. In terms of biological role, cyclin which controls both the G1/S and the G2/M transition phases of the cell cycle. Functions through the formation of specific serine/threonine protein kinase holoenzyme complexes with the cyclin-dependent protein kinases CDK1 or CDK2. The cyclin subunit confers the substrate specificity of these complexes and differentially interacts with and activates CDK1 and CDK2 throughout the cell cycle. This is Cyclin-A2 from Homo sapiens (Human).